Reading from the N-terminus, the 1295-residue chain is Phosphoribosylformylglycinamidine synthase (1295 aa).

Residues 305 to 327 (WPGAATGSGGEIRDEGATGRGAK) form a disordered region. ATP contacts are provided by residues 307–318 (GAATGSGGEIRD) and A678. Positions 718, 722, and 884 each coordinate Mg(2+). Residue S886 coordinates ATP. Residues 1042 to 1295 (VAVLREQGVN…IFRNARKQLG (254 aa)) enclose the Glutamine amidotransferase type-1 domain. C1135 acts as the Nucleophile in catalysis. Residues H1260 and E1262 contribute to the active site.

This sequence in the N-terminal section; belongs to the FGAMS family. Monomer.

Its subcellular location is the cytoplasm. It carries out the reaction N(2)-formyl-N(1)-(5-phospho-beta-D-ribosyl)glycinamide + L-glutamine + ATP + H2O = 2-formamido-N(1)-(5-O-phospho-beta-D-ribosyl)acetamidine + L-glutamate + ADP + phosphate + H(+). Its pathway is purine metabolism; IMP biosynthesis via de novo pathway; 5-amino-1-(5-phospho-D-ribosyl)imidazole from N(2)-formyl-N(1)-(5-phospho-D-ribosyl)glycinamide: step 1/2. Phosphoribosylformylglycinamidine synthase involved in the purines biosynthetic pathway. Catalyzes the ATP-dependent conversion of formylglycinamide ribonucleotide (FGAR) and glutamine to yield formylglycinamidine ribonucleotide (FGAM) and glutamate. This chain is Phosphoribosylformylglycinamidine synthase, found in Shigella boydii serotype 4 (strain Sb227).